A 347-amino-acid polypeptide reads, in one-letter code: Chaperone protein DnaJ 1 (347 aa).

Residues 5 to 75 (DPHSLLGLSP…PAAAPHDAQA (71 aa)) form the J domain. Low complexity predominate over residues 68–77 (AAPHDAQAAD). A disordered region spans residues 68–91 (AAPHDAQAADARPEPPPEAPPRGA). Residues 107-181 (GGEKAFTIAD…CHGSGQARAA (75 aa)) form a CR-type zinc finger. Residues cysteine 120, cysteine 123, cysteine 137, cysteine 140, cysteine 155, cysteine 158, cysteine 169, and cysteine 172 each contribute to the Zn(2+) site. 4 CXXCXGXG motif repeats span residues 120 to 127 (CGACGGSG), 137 to 144 (CATCHGSG), 155 to 162 (CADCAGRG), and 169 to 176 (CGACHGSG).

It belongs to the DnaJ family. As to quaternary structure, homodimer. Zn(2+) serves as cofactor.

The protein localises to the cytoplasm. Functionally, participates actively in the response to hyperosmotic and heat shock by preventing the aggregation of stress-denatured proteins and by disaggregating proteins, also in an autonomous, DnaK-independent fashion. Unfolded proteins bind initially to DnaJ; upon interaction with the DnaJ-bound protein, DnaK hydrolyzes its bound ATP, resulting in the formation of a stable complex. GrpE releases ADP from DnaK; ATP binding to DnaK triggers the release of the substrate protein, thus completing the reaction cycle. Several rounds of ATP-dependent interactions between DnaJ, DnaK and GrpE are required for fully efficient folding. Also involved, together with DnaK and GrpE, in the DNA replication of plasmids through activation of initiation proteins. This chain is Chaperone protein DnaJ 1, found in Aromatoleum aromaticum (strain DSM 19018 / LMG 30748 / EbN1) (Azoarcus sp. (strain EbN1)).